Consider the following 180-residue polypeptide: Large ribosomal subunit protein uL6 (180 aa).

It belongs to the universal ribosomal protein uL6 family. In terms of assembly, part of the 50S ribosomal subunit.

This protein binds to the 23S rRNA, and is important in its secondary structure. It is located near the subunit interface in the base of the L7/L12 stalk, and near the tRNA binding site of the peptidyltransferase center. The polypeptide is Large ribosomal subunit protein uL6 (Clostridium tetani (strain Massachusetts / E88)).